We begin with the raw amino-acid sequence, 230 residues long: Claudin-2 (230 aa).

The Cytoplasmic portion of the chain corresponds to 1–7 (MASLGVQ). Residues 8 to 28 (LVGYILGLLGLLGTSIAMLLP) traverse the membrane as a helical segment. Residues 29 to 81 (NWRTSSYVGASIVTAVGFSKGLWMECATHSTGITQCDIYSTLLGLPADIQAAQ) are Extracellular-facing. An intrachain disulfide couples Cys54 to Cys64. A helical transmembrane segment spans residues 82–102 (AMMVTSSAMSSLACIISVVGM). The Cytoplasmic portion of the chain corresponds to 103–116 (RCTVFCQDSRAKDR). A helical membrane pass occupies residues 117 to 137 (VAVVGGVFFILGGILGFIPVA). At 138–162 (WNLHGILRDFYSPLVPDSMKFEIGE) the chain is on the extracellular side. The helical transmembrane segment at 163–183 (ALYLGIISALFSLVAGVILCF) threads the bilayer. The Cytoplasmic portion of the chain corresponds to 184–230 (SCSPQGNRTNYYDGYQAQPLATRSSPRSAQQPKAKSEFNSYSLTGYV). Residues 205–230 (TRSSPRSAQQPKAKSEFNSYSLTGYV) form a disordered region. A Glycyl lysine isopeptide (Lys-Gly) (interchain with G-Cter in SUMO) cross-link involves residue Lys218. Ser219 and Ser223 each carry phosphoserine. Positions 229–230 (YV) are interactions with TJP1, TJP2 and TJP3.

Belongs to the claudin family. In terms of assembly, can form homo- and heteropolymers with other claudins to mediate paracellular barrier and channel functions of tight junctions in response to physiological stimuli. Homopolymers interact with CLDN3, but not CLDN1, homopolymers. Directly interacts with TJP1/ZO-1, TJP2/ZO-2 and TJP3/ZO-3. Post-translationally, the disulfide bond is necessary for pore formation, but is not required for correct protein trafficking. As to expression, expressed in the kidney, liver and intestine, with higher levels in the ileum than in the jejunum. Low levels in the brain. Expressed in colonic epithelium (at protein level). Expressed in the perivenous regions, bile ducts, and gallbladder epithelium (at protein level).

It localises to the cell junction. It is found in the tight junction. Its subcellular location is the cell membrane. It catalyses the reaction Na(+)(in) = Na(+)(out). The enzyme catalyses K(+)(in) = K(+)(out). The catalysed reaction is Rb(+)(in) = Rb(+)(out). It carries out the reaction Li(+)(in) = Li(+)(out). It catalyses the reaction Cs(+)(in) = Cs(+)(out). The enzyme catalyses Ca(2+)(in) = Ca(2+)(out). The catalysed reaction is methylamine(out) = methylamine(in). It carries out the reaction choline(out) = choline(in). It catalyses the reaction H2O(in) = H2O(out). With respect to regulation, the channel permeability is down-regulated at acidic pH. Functionally, forms paracellular channels: polymerizes in tight junction strands with cation- and water-selective channels through the strands, conveying epithelial permeability in a process known as paracellular tight junction permeability. In intestinal epithelium, allows for sodium and water fluxes from the peritoneal side to the lumen of the intestine to regulate nutrient absorption and clear enteric pathogens as part of mucosal immune response. In kidney, allows passive sodium and calcium reabsorption across proximal tubules from the lumen back to the bloodstream. In the hepatobiliary tract, allows paracellular water and cation fluxes in the hepatic perivenous areas and biliary epithelium to generate bile flow and maintain osmotic gradients. This is Claudin-2 from Mus musculus (Mouse).